Reading from the N-terminus, the 254-residue chain is Coiled-coil domain-containing protein 152 (254 aa).

Residues 61–246 (SIKEECATLH…LEQRLSVGKD (186 aa)) are a coiled coil.

In terms of tissue distribution, detected in stomach.

In Homo sapiens (Human), this protein is Coiled-coil domain-containing protein 152 (CCDC152).